We begin with the raw amino-acid sequence, 296 residues long: uncharacterized protein (296 aa).

A run of 6 helical transmembrane segments spans residues 1–21 (MVNLLFLFFIMSFFPNNIFDY), 30–50 (LITASLKILFALAILLIGFWL), 71–91 (FISFAGNISYYLLLVVFFVLC), 92–112 (LAQLGIQTSSLVALLGASTLA), 113–133 (IGLALQGSLANVAGGILLVLF), and 142–162 (IEVAGIEGIVESIEILSTTIC).

The protein belongs to the MscS (TC 1.A.23) family.

The protein resides in the cell membrane. This is an uncharacterized protein from Synechocystis sp. (strain ATCC 27184 / PCC 6803 / Kazusa).